A 747-amino-acid polypeptide reads, in one-letter code: Asparagine synthetase [glutamine-hydrolyzing] 2 (747 aa).

Residue C2 is the For GATase activity of the active site. In terms of domain architecture, Glutamine amidotransferase type-2 spans 2-218; it reads CGLAGIINLA…AGHYLEINLT (217 aa). L-glutamine contacts are provided by residues 52–56, 77–79, and D100; these read RLSIL and NGE. ATP is bound at residue 395–396; sequence SP.

The protein belongs to the asparagine synthetase family.

It catalyses the reaction L-aspartate + L-glutamine + ATP + H2O = L-asparagine + L-glutamate + AMP + diphosphate + H(+). It functions in the pathway amino-acid biosynthesis; L-asparagine biosynthesis; L-asparagine from L-aspartate (L-Gln route): step 1/1. The chain is Asparagine synthetase [glutamine-hydrolyzing] 2 (asnH) from Bacillus subtilis (strain 168).